A 466-amino-acid polypeptide reads, in one-letter code: Asparagine--tRNA ligase (466 aa).

Belongs to the class-II aminoacyl-tRNA synthetase family. In terms of assembly, homodimer.

It localises to the cytoplasm. The enzyme catalyses tRNA(Asn) + L-asparagine + ATP = L-asparaginyl-tRNA(Asn) + AMP + diphosphate + H(+). The polypeptide is Asparagine--tRNA ligase (Colwellia psychrerythraea (strain 34H / ATCC BAA-681) (Vibrio psychroerythus)).